Reading from the N-terminus, the 801-residue chain is U-box domain-containing protein 44 (801 aa).

One can recognise a U-box domain in the interval 22-101 (HIYEAFICPL…EEWRSRNDAA (80 aa)). 9 ARM repeats span residues 134–173 (RSNR…VVVE), 176–215 (DESK…ELSK), 218–259 (ALCE…NMER), 261–300 (EEIV…ELPL), 301–340 (NNDV…KISS), 342–386 (EGSA…NIVN), 390–429 (DFDK…GLTS), 435–475 (PKVV…NLSP), and 480–521 (ELAK…ELPD).

As to quaternary structure, interacts with AAO3. Binds to SD129. In terms of tissue distribution, expressed in leaves, root vasculature and guard cells.

The catalysed reaction is S-ubiquitinyl-[E2 ubiquitin-conjugating enzyme]-L-cysteine + [acceptor protein]-L-lysine = [E2 ubiquitin-conjugating enzyme]-L-cysteine + N(6)-ubiquitinyl-[acceptor protein]-L-lysine.. It participates in protein modification; protein ubiquitination. Its function is as follows. Functions as an E3 ubiquitin-protein ligase. Prevents premature senescence probably by targeting proteins involved in this process for degradation. Promotes the degradation of AAO3 and thus represses abscisic acid (ABA) biosynthesis. The chain is U-box domain-containing protein 44 (PUB44) from Arabidopsis thaliana (Mouse-ear cress).